We begin with the raw amino-acid sequence, 297 residues long: Light-independent protochlorophyllide reductase iron-sulfur ATP-binding protein (297 aa).

Residues 41 to 46 (GIGKST) and Lys70 contribute to the ATP site. Ser45 contributes to the Mg(2+) binding site. 2 residues coordinate [4Fe-4S] cluster: Cys126 and Cys160. Residues 211 to 212 (NR) and 235 to 237 (PDL) each bind ATP.

Belongs to the NifH/BchL/ChlL family. In terms of assembly, homodimer. Protochlorophyllide reductase is composed of three subunits; BchL, BchN and BchB. It depends on [4Fe-4S] cluster as a cofactor.

It carries out the reaction chlorophyllide a + oxidized 2[4Fe-4S]-[ferredoxin] + 2 ADP + 2 phosphate = protochlorophyllide a + reduced 2[4Fe-4S]-[ferredoxin] + 2 ATP + 2 H2O. It participates in porphyrin-containing compound metabolism; bacteriochlorophyll biosynthesis (light-independent). Functionally, component of the dark-operative protochlorophyllide reductase (DPOR) that uses Mg-ATP and reduced ferredoxin to reduce ring D of protochlorophyllide (Pchlide) to form chlorophyllide a (Chlide). This reaction is light-independent. The L component serves as a unique electron donor to the NB-component of the complex, and binds Mg-ATP. The chain is Light-independent protochlorophyllide reductase iron-sulfur ATP-binding protein from Methylobacterium radiotolerans (strain ATCC 27329 / DSM 1819 / JCM 2831 / NBRC 15690 / NCIMB 10815 / 0-1).